Here is a 419-residue protein sequence, read N- to C-terminus: UDP-N-acetylglucosamine 1-carboxyvinyltransferase (419 aa).

22–23 (KN) serves as a coordination point for phosphoenolpyruvate. Position 93 (Arg93) interacts with UDP-N-acetyl-alpha-D-glucosamine. Cys117 serves as the catalytic Proton donor. Cys117 is modified (2-(S-cysteinyl)pyruvic acid O-phosphothioketal). Asp306 and Val328 together coordinate UDP-N-acetyl-alpha-D-glucosamine.

Belongs to the EPSP synthase family. MurA subfamily.

The protein localises to the cytoplasm. The enzyme catalyses phosphoenolpyruvate + UDP-N-acetyl-alpha-D-glucosamine = UDP-N-acetyl-3-O-(1-carboxyvinyl)-alpha-D-glucosamine + phosphate. It participates in cell wall biogenesis; peptidoglycan biosynthesis. Functionally, cell wall formation. Adds enolpyruvyl to UDP-N-acetylglucosamine. This Thioalkalivibrio sulfidiphilus (strain HL-EbGR7) protein is UDP-N-acetylglucosamine 1-carboxyvinyltransferase.